The chain runs to 779 residues: Endonuclease MutS2 (779 aa).

328–335 serves as a coordination point for ATP; that stretch reads GPNTGGKT. Positions 704-779 constitute a Smr domain; it reads LDLRGKRYEE…GSGATIVTLG (76 aa).

Belongs to the DNA mismatch repair MutS family. MutS2 subfamily. Homodimer. Binds to stalled ribosomes, contacting rRNA.

Its function is as follows. Endonuclease that is involved in the suppression of homologous recombination and thus may have a key role in the control of bacterial genetic diversity. Functionally, acts as a ribosome collision sensor, splitting the ribosome into its 2 subunits. Detects stalled/collided 70S ribosomes which it binds and splits by an ATP-hydrolysis driven conformational change. Acts upstream of the ribosome quality control system (RQC), a ribosome-associated complex that mediates the extraction of incompletely synthesized nascent chains from stalled ribosomes and their subsequent degradation. Probably generates substrates for RQC. The sequence is that of Endonuclease MutS2 from Streptococcus pyogenes serotype M5 (strain Manfredo).